The chain runs to 96 residues: Co-chaperonin GroES (96 aa).

It belongs to the GroES chaperonin family. In terms of assembly, heptamer of 7 subunits arranged in a ring. Interacts with the chaperonin GroEL.

Its subcellular location is the cytoplasm. Together with the chaperonin GroEL, plays an essential role in assisting protein folding. The GroEL-GroES system forms a nano-cage that allows encapsulation of the non-native substrate proteins and provides a physical environment optimized to promote and accelerate protein folding. GroES binds to the apical surface of the GroEL ring, thereby capping the opening of the GroEL channel. In Coxiella burnetii (strain Dugway 5J108-111), this protein is Co-chaperonin GroES.